The chain runs to 311 residues: tRNA-cytidine(32) 2-sulfurtransferase (311 aa).

The PP-loop motif motif lies at 47–52; it reads SGGKDS. Positions 122, 125, and 213 each coordinate [4Fe-4S] cluster.

It belongs to the TtcA family. In terms of assembly, homodimer. Requires Mg(2+) as cofactor. [4Fe-4S] cluster serves as cofactor.

It is found in the cytoplasm. The catalysed reaction is cytidine(32) in tRNA + S-sulfanyl-L-cysteinyl-[cysteine desulfurase] + AH2 + ATP = 2-thiocytidine(32) in tRNA + L-cysteinyl-[cysteine desulfurase] + A + AMP + diphosphate + H(+). It participates in tRNA modification. In terms of biological role, catalyzes the ATP-dependent 2-thiolation of cytidine in position 32 of tRNA, to form 2-thiocytidine (s(2)C32). The sulfur atoms are provided by the cysteine/cysteine desulfurase (IscS) system. The polypeptide is tRNA-cytidine(32) 2-sulfurtransferase (Escherichia coli O81 (strain ED1a)).